Consider the following 206-residue polypeptide: uncharacterized protein (206 aa).

2 disordered regions span residues R38 to A88 and H160 to E206. A compositionally biased stretch (low complexity) spans Q40–L73. S68 carries the post-translational modification Phosphoserine. The segment covering T78–A88 has biased composition (polar residues). Positions S165–S186 are enriched in low complexity. The span at P192–E206 shows a compositional bias: polar residues.

It is found in the cytoplasm. This is an uncharacterized protein from Saccharomyces cerevisiae (strain ATCC 204508 / S288c) (Baker's yeast).